A 130-amino-acid polypeptide reads, in one-letter code: Protein ApaG (130 aa).

The ApaG domain occupies 3–127; it reads KAETRGITVT…FSLDSPHLRR (125 aa).

This is Protein ApaG from Methylorubrum populi (strain ATCC BAA-705 / NCIMB 13946 / BJ001) (Methylobacterium populi).